An 821-amino-acid chain; its full sequence is Serine/threonine-protein kinase CTR1 (821 aa).

Disordered stretches follow at residues 1 to 76 (MEMP…LNNQ) and 481 to 502 (NPGG…PSAN). The span at 14–25 (SQFSDDQVSVSV) shows a compositional bias: low complexity. Over residues 35–49 (SLSSENRSNHNSGNT) the composition is skewed to polar residues. In terms of domain architecture, Protein kinase spans 551-809 (LNIKEKIGAG…TIMDLLRPLI (259 aa)). Residues 557-565 (IGAGSFGTV) and Lys578 contribute to the ATP site. The Proton acceptor role is filled by Asp676.

It belongs to the protein kinase superfamily. TKL Ser/Thr protein kinase family. RAF subfamily. Interacts with EIN2 (via C-terminus). Expressed in both seedlings and adult plants.

It carries out the reaction L-seryl-[protein] + ATP = O-phospho-L-seryl-[protein] + ADP + H(+). The enzyme catalyses L-threonyl-[protein] + ATP = O-phospho-L-threonyl-[protein] + ADP + H(+). Kinase activity is inhibited by C24:1-ceramide during hypoxia (e.g. submergences). Functionally, acts as a negative regulator in the ethylene response pathway. Phosphorylates the cytosolic C-terminal domain of EIN2, preventing the signaling in the absence of ethylene. Interacts with C24:1-ceramide upon hypoxic conditions (e.g. submergences) to in turn regulate EIN2 endoplasmic reticulum (ER)-to-nucleus translocation and EIN3 stabilization. This chain is Serine/threonine-protein kinase CTR1, found in Arabidopsis thaliana (Mouse-ear cress).